A 401-amino-acid polypeptide reads, in one-letter code: All trans-polyprenyl-diphosphate synthase PDSS2 (401 aa).

Belongs to the FPP/GGPP synthase family. Heterotetramer composed of 2 PDSS1/DPS1 and 2 PDSS2/DLP1 subunits.

The protein resides in the mitochondrion. The enzyme catalyses 7 isopentenyl diphosphate + (2E,6E)-farnesyl diphosphate = all-trans-decaprenyl diphosphate + 7 diphosphate. It carries out the reaction 6 isopentenyl diphosphate + (2E,6E)-farnesyl diphosphate = all-trans-nonaprenyl diphosphate + 6 diphosphate. It functions in the pathway cofactor biosynthesis; ubiquinone biosynthesis. Its function is as follows. Heterotetrameric enzyme that catalyzes the condensation of farnesyl diphosphate (FPP), which acts as a primer, and isopentenyl diphosphate (IPP) to produce prenyl diphosphates of varying chain lengths and participates in the determination of the side chain of ubiquinone. Supplies nona and decaprenyl diphosphate, the precursors for the side chain of the isoprenoid quinones ubiquinone-9 (Q9) and ubiquinone-10 (Q10) respectively. The enzyme adds isopentenyl diphosphate molecules sequentially to farnesyl diphosphate with trans stereochemistry. May play a role during cerebellar development. May regulate mitochondrial respiratory chain function. The protein is All trans-polyprenyl-diphosphate synthase PDSS2 of Rattus norvegicus (Rat).